The chain runs to 406 residues: LIM/homeobox protein Lhx2 (406 aa).

LIM zinc-binding domains are found at residues 53-105 (CAGC…CKED) and 115-168 (CARC…CRLH). The interval 250 to 270 (DAEHLDRDQPYPSSQKTKRMR) is disordered. The segment at residues 266–325 (TKRMRTSFKHHQLRTMKSYFAINHNPDAKDLKQLAQKTGLTKRVLQVWFQNARAKFRRNL) is a DNA-binding region (homeobox). Residues 307-323 (KRVLQVWFQNARAKFRR) carry the Nuclear localization signal motif. Over residues 328 to 356 (QENTGVDKTSDATLQTGTPSGPASELSNA) the composition is skewed to polar residues. 2 disordered regions span residues 328-375 (QENT…SPTL) and 387-406 (GNLE…TNLF). Positions 357 to 375 (SLSPSSTPTTLTDLTSPTL) are enriched in low complexity. Residues 396 to 406 (SPSQTTLTNLF) show a composition bias toward polar residues.

As to quaternary structure, interacts (via LIM domains) with CITED2. Interacts with POU4F2 isoform 1.

The protein localises to the nucleus. Functionally, acts as a transcriptional activator. Stimulates the promoter of the alpha-glycoprotein gene. Transcriptional regulatory protein involved in the control of cell differentiation in developing lymphoid and neural cell types. This is LIM/homeobox protein Lhx2 (Lhx2) from Mus musculus (Mouse).